The sequence spans 537 residues: Phosphoenolpyruvate carboxykinase (ATP) (537 aa).

Substrate-binding residues include R61, Y195, and K201. ATP-binding positions include K201, H220, and G236–T244. Mn(2+) contacts are provided by K201 and H220. D257 is a Mn(2+) binding site. ATP is bound by residues E285, R323, and T448. Substrate is bound at residue R323.

This sequence belongs to the phosphoenolpyruvate carboxykinase (ATP) family. It depends on Mn(2+) as a cofactor.

The protein localises to the cytoplasm. The enzyme catalyses oxaloacetate + ATP = phosphoenolpyruvate + ADP + CO2. It participates in carbohydrate biosynthesis; gluconeogenesis. Functionally, involved in the gluconeogenesis. Catalyzes the conversion of oxaloacetate (OAA) to phosphoenolpyruvate (PEP) through direct phosphoryl transfer between the nucleoside triphosphate and OAA. The chain is Phosphoenolpyruvate carboxykinase (ATP) from Rhodopseudomonas palustris (strain BisA53).